We begin with the raw amino-acid sequence, 306 residues long: Pantothenate kinase (306 aa).

Position 90 to 97 (90 to 97 (GSVAVGKS)) interacts with ATP.

This sequence belongs to the prokaryotic pantothenate kinase family.

Its subcellular location is the cytoplasm. It carries out the reaction (R)-pantothenate + ATP = (R)-4'-phosphopantothenate + ADP + H(+). It participates in cofactor biosynthesis; coenzyme A biosynthesis; CoA from (R)-pantothenate: step 1/5. The sequence is that of Pantothenate kinase from Ligilactobacillus salivarius (strain UCC118) (Lactobacillus salivarius).